A 388-amino-acid chain; its full sequence is S-adenosylmethionine synthase (388 aa).

His-17 contributes to the ATP binding site. Asp-19 serves as a coordination point for Mg(2+). Glu-45 contributes to the K(+) binding site. Positions 58 and 106 each coordinate L-methionine. Residues 106-116 form a flexible loop region; sequence QSAHIAQGVDK. Residues 166 to 168, Asp-241, 247 to 248, Ala-264, and Lys-268 each bind ATP; these read DAK and RK. Asp-241 contributes to the L-methionine binding site. Lys-272 contacts L-methionine.

This sequence belongs to the AdoMet synthase family. As to quaternary structure, homotetramer; dimer of dimers. Mg(2+) serves as cofactor. It depends on K(+) as a cofactor.

It is found in the cytoplasm. It carries out the reaction L-methionine + ATP + H2O = S-adenosyl-L-methionine + phosphate + diphosphate. The protein operates within amino-acid biosynthesis; S-adenosyl-L-methionine biosynthesis; S-adenosyl-L-methionine from L-methionine: step 1/1. Functionally, catalyzes the formation of S-adenosylmethionine (AdoMet) from methionine and ATP. The overall synthetic reaction is composed of two sequential steps, AdoMet formation and the subsequent tripolyphosphate hydrolysis which occurs prior to release of AdoMet from the enzyme. The protein is S-adenosylmethionine synthase of Cereibacter sphaeroides (strain ATCC 17023 / DSM 158 / JCM 6121 / CCUG 31486 / LMG 2827 / NBRC 12203 / NCIMB 8253 / ATH 2.4.1.) (Rhodobacter sphaeroides).